We begin with the raw amino-acid sequence, 233 residues long: 5'-methylthioadenosine/S-adenosylhomocysteine nucleosidase (233 aa).

Glutamate 12 serves as the catalytic Proton acceptor. Residues glycine 78, isoleucine 156, and 177 to 178 (ME) each bind substrate. The Proton donor role is filled by aspartate 201.

The protein belongs to the PNP/UDP phosphorylase family. MtnN subfamily.

The catalysed reaction is S-adenosyl-L-homocysteine + H2O = S-(5-deoxy-D-ribos-5-yl)-L-homocysteine + adenine. It carries out the reaction S-methyl-5'-thioadenosine + H2O = 5-(methylsulfanyl)-D-ribose + adenine. It catalyses the reaction 5'-deoxyadenosine + H2O = 5-deoxy-D-ribose + adenine. It participates in amino-acid biosynthesis; L-methionine biosynthesis via salvage pathway; S-methyl-5-thio-alpha-D-ribose 1-phosphate from S-methyl-5'-thioadenosine (hydrolase route): step 1/2. Catalyzes the irreversible cleavage of the glycosidic bond in both 5'-methylthioadenosine (MTA) and S-adenosylhomocysteine (SAH/AdoHcy) to adenine and the corresponding thioribose, 5'-methylthioribose and S-ribosylhomocysteine, respectively. Also cleaves 5'-deoxyadenosine, a toxic by-product of radical S-adenosylmethionine (SAM) enzymes, into 5-deoxyribose and adenine. The polypeptide is 5'-methylthioadenosine/S-adenosylhomocysteine nucleosidase (Listeria monocytogenes serotype 4b (strain F2365)).